Reading from the N-terminus, the 196-residue chain is Mitochondrial inner membrane protein SHH3 (196 aa).

The N-terminal 53 residues, 1–53 (MKATIQRVTSVFGVPRASVFVPRISTPFILHNYISNGRMDLFSKEFHNGRVSK), are a transit peptide targeting the mitochondrion. Topologically, residues 54–97 (SDLWSSNKEEELLVSQRKKRPISPHLTVYEPEMSWYLSSLHRIS) are mitochondrial matrix. Residues S91 and R95 each contribute to the a ubiquinone site. A helical transmembrane segment spans residues 98–118 (GVLLALGFYAFTITLGVTTIM). The Mitochondrial intermembrane segment spans residues 119–137 (GMDTTFQDLNKWYHEKMPK). Residues 138–160 (WSQWVAKGSAAYLFAFHFGNGIR) form a helical membrane-spanning segment. H154 contacts heme. Residues 161-174 (HLIWDMGYELTNRG) are Mitochondrial matrix-facing. Residues 175–195 (VIKTGSIVLAGTLVLGTYLLA) traverse the membrane as a helical segment. Residue Q196 is a topological domain, mitochondrial intermembrane.

It belongs to the cytochrome b560 family.

Its subcellular location is the mitochondrion inner membrane. Homolog of SDH3, but seems not to be a stoichiometric subunit of either the succinate dehydrogenase (SDH) complex or the mitochondrial inner membrane translocase TIM22 complex. In Saccharomyces cerevisiae (strain ATCC 204508 / S288c) (Baker's yeast), this protein is Mitochondrial inner membrane protein SHH3.